Consider the following 55-residue polypeptide: MVGQEQLESSPLCQHSDNETETKRECSVVIPDDWQLTSQQQAFIELFAEDDQPKQ.

Polar residues predominate over residues 1–15; sequence MVGQEQLESSPLCQH. Residues 1–26 form a disordered region; it reads MVGQEQLESSPLCQHSDNETETKREC. Over residues 16-26 the composition is skewed to basic and acidic residues; the sequence is SDNETETKREC.

This is an uncharacterized protein from Escherichia coli (strain K12).